Consider the following 467-residue polypeptide: Glutamate--tRNA ligase 1 (467 aa).

The 'HIGH' region signature appears at 8–18; it reads PSPTGHLHVGG. The 'KMSKS' region motif lies at 230–234; that stretch reads PLSKR. Residue Lys-233 participates in ATP binding.

The protein belongs to the class-I aminoacyl-tRNA synthetase family. Glutamate--tRNA ligase type 1 subfamily. As to quaternary structure, monomer.

The protein localises to the cytoplasm. It catalyses the reaction tRNA(Glu) + L-glutamate + ATP = L-glutamyl-tRNA(Glu) + AMP + diphosphate. Catalyzes the attachment of glutamate to tRNA(Glu) in a two-step reaction: glutamate is first activated by ATP to form Glu-AMP and then transferred to the acceptor end of tRNA(Glu). The polypeptide is Glutamate--tRNA ligase 1 (Petrotoga mobilis (strain DSM 10674 / SJ95)).